Reading from the N-terminus, the 712-residue chain is Ribosomal RNA large subunit methyltransferase K/L (712 aa).

Positions 42–153 (QALRIVMWSR…KGRASLSIDL (112 aa)) constitute a THUMP domain.

This sequence belongs to the methyltransferase superfamily. RlmKL family.

It localises to the cytoplasm. The catalysed reaction is guanosine(2445) in 23S rRNA + S-adenosyl-L-methionine = N(2)-methylguanosine(2445) in 23S rRNA + S-adenosyl-L-homocysteine + H(+). It catalyses the reaction guanosine(2069) in 23S rRNA + S-adenosyl-L-methionine = N(2)-methylguanosine(2069) in 23S rRNA + S-adenosyl-L-homocysteine + H(+). Functionally, specifically methylates the guanine in position 2445 (m2G2445) and the guanine in position 2069 (m7G2069) of 23S rRNA. In Stenotrophomonas maltophilia (strain R551-3), this protein is Ribosomal RNA large subunit methyltransferase K/L.